The sequence spans 102 residues: Integration host factor subunit beta (102 aa).

Belongs to the bacterial histone-like protein family. As to quaternary structure, heterodimer of an alpha and a beta chain.

This protein is one of the two subunits of integration host factor, a specific DNA-binding protein that functions in genetic recombination as well as in transcriptional and translational control. In Rhizobium rhizogenes (strain K84 / ATCC BAA-868) (Agrobacterium radiobacter), this protein is Integration host factor subunit beta.